The sequence spans 350 residues: DNA polymerase IV (350 aa).

Residues 6–187 enclose the UmuC domain; it reads IIHIDMDAFY…LPVEKIFGIG (182 aa). 2 residues coordinate Mg(2+): Asp10 and Asp105. Glu106 is an active-site residue.

Belongs to the DNA polymerase type-Y family. In terms of assembly, monomer. The cofactor is Mg(2+).

The protein localises to the cytoplasm. The catalysed reaction is DNA(n) + a 2'-deoxyribonucleoside 5'-triphosphate = DNA(n+1) + diphosphate. Poorly processive, error-prone DNA polymerase involved in untargeted mutagenesis. Copies undamaged DNA at stalled replication forks, which arise in vivo from mismatched or misaligned primer ends. These misaligned primers can be extended by PolIV. Exhibits no 3'-5' exonuclease (proofreading) activity. May be involved in translesional synthesis, in conjunction with the beta clamp from PolIII. The protein is DNA polymerase IV of Protochlamydia amoebophila (strain UWE25).